Reading from the N-terminus, the 1111-residue chain is Cell death abnormality protein 1 (1111 aa).

Residues 1 to 18 form the signal peptide; the sequence is MRLILLVLLATWQVVVDT. At 19 to 910 the chain is on the extracellular side; that stretch reads RAPTFPDKLT…NGAGRSTGLT (892 aa). The 73-residue stretch at 41 to 113 folds into the EMI domain; the sequence is GDHVCTVKTI…QCCDGYYQTK (73 aa). 15 disulfide bridges follow: cysteine 45–cysteine 106, cysteine 71–cysteine 80, cysteine 105–cysteine 117, cysteine 121–cysteine 130, cysteine 125–cysteine 136, cysteine 138–cysteine 147, cysteine 160–cysteine 172, cysteine 166–cysteine 179, cysteine 181–cysteine 190, cysteine 203–cysteine 215, cysteine 209–cysteine 221, cysteine 223–cysteine 232, cysteine 245–cysteine 257, cysteine 251–cysteine 264, and cysteine 266–cysteine 275. The N-linked (GlcNAc...) asparagine glycan is linked to asparagine 66. EGF-like domains lie at 118–148, 156–191, 199–233, and 241–276; these read LPDCNPPCKKGKCIEPGKCECDPGYGGKYCA, WGLGCSKSCDCENGANCDPELGTCICTSGFQGERCE, WGPNCVKSCPCQNGGKCNKEGKCVCSDGWGGEFCL, and FGAECKFECNCQNGATCDNTNGKCICKSGYHGALCE. N-linked (GlcNAc...) asparagine glycosylation is found at asparagine 333 and asparagine 345. The 38-residue stretch at 421-458 folds into the EGF-like 5 domain; it reads YGPNCEKQAMCDWNHASECNPETGSCVCKPGRTGKNCS. 3 cysteine pairs are disulfide-bonded: cysteine 425/cysteine 439, cysteine 431/cysteine 446, and cysteine 448/cysteine 457. N-linked (GlcNAc...) asparagine glycosylation is present at asparagine 456. The stretch at 629-680 is one FU repeat; that stretch reads DQKCDPNTFGFLCQETVTPSPCASTDPKNGVCLSCPPGSSGIHCEHNCPAGS. The EGF-like 6 domain occupies 681-716; sequence YGDGCQQVCSCADGHGCDPTTGECICEPGYHGKTCS. 3 cysteine pairs are disulfide-bonded: cysteine 685-cysteine 697, cysteine 691-cysteine 704, and cysteine 706-cysteine 715. A helical membrane pass occupies residues 911 to 931; it reads WFFVLLIVALCGGLGLIALFY. Residues 931–1007 form an interaction with trim-21 region; that stretch reads YRNKYQKEKD…EEELENKKIH (77 aa). At 932–1111 the chain is on the cytoplasmic side; it reads RNKYQKEKDP…KKRAQDNLYT (180 aa). 2 disordered regions span residues 940-993 and 1006-1111; these read DPDM…PNGL and IHGR…NLYT. The NPXY motif lies at 962–965; the sequence is NPLY. A compositionally biased stretch (polar residues) spans 963 to 980; the sequence is PLYSRQSVFPDSDAFSSE. Tyrosine 1019 carries the post-translational modification Phosphotyrosine; by SRC. Positions 1019–1022 match the YXXL motif; it reads YASL. Residues 1030–1039 show a composition bias toward low complexity; sequence SSSSASASAS. Residues 1068–1083 are compositionally biased toward polar residues; that stretch reads NSISPAHAVTTSNHNE.

As to quaternary structure, interacts (via C-terminus) with ced-6 (via PTB domain). Interacts with nck-1; the interaction is required for ced-1 degradation through the proteasome pathway. Interacts with V-ATPase vha-10. Phosphorylation of Tyr-1019, within the YXXL motif, by src-1 is thought to initiate phagosomal formation. In terms of processing, 'Lys-48'-linked polyubiquitination by trim-21 leads to proteasomal degradation. As to expression, expressed in engulfing cells and syncytium hypodermal cells. Ced-7 is necessary for clustering around cell corpses prior to engulfment.

It is found in the cell membrane. The protein resides in the cytoplasmic vesicle. Its subcellular location is the phagosome membrane. Involved in programmed cell death, also called apoptosis, in both somatic and germ cells. Acts by recruiting ced-6 to phagosomes which enables actin-dependent cytoskeletal reorganization and subsequent engulfment of the apoptotic cell corpse. Has a role in the association of ppk-3 and rab-7 with the phagosomal surface which is necessary for the incorporation of lysosomes to phagosomes during phagosome maturation. Activates the expression of unfolded protein response genes, which are involved in the immune response to live bacteria. This chain is Cell death abnormality protein 1, found in Caenorhabditis elegans.